The following is a 182-amino-acid chain: MMEERPSADEVLLIGKVIDAFGLRGEIKIRAITDQVDHLRRHVRTVFLGEERRPFTLQRVHEPKAGILILSLGGVTDRTTAEALRGAEVTIRECDAAPLDQDEYFIHQLYGLRVIESGGGEIGVVREVVQTGANDVIVVERQGRSDTLLPMIHDVVERLDVAAGQIVVRLLPGLIDDDNQEG.

In terms of domain architecture, PRC barrel spans 101–174 (QDEYFIHQLY…QIVVRLLPGL (74 aa)).

This sequence belongs to the RimM family. In terms of assembly, binds ribosomal protein uS19.

It localises to the cytoplasm. An accessory protein needed during the final step in the assembly of 30S ribosomal subunit, possibly for assembly of the head region. Essential for efficient processing of 16S rRNA. May be needed both before and after RbfA during the maturation of 16S rRNA. It has affinity for free ribosomal 30S subunits but not for 70S ribosomes. This Roseiflexus sp. (strain RS-1) protein is Ribosome maturation factor RimM.